The chain runs to 779 residues: ATP-dependent RNA helicase SUPV3L1, mitochondrial (779 aa).

Residues methionine 1–serine 40 constitute a mitochondrion transit peptide. Lysine 99 is modified (N6-acetyllysine). The region spanning glutamate 194–tyrosine 334 is the Helicase ATP-binding domain. Position 207-214 (glycine 207–threonine 214) interacts with ATP. The 169-residue stretch at valine 353 to alanine 521 folds into the Helicase C-terminal domain. Residues proline 650–aspartate 779 are interaction with LAMTOR5, important for protein stability. Residues serine 693–serine 703 show a composition bias toward polar residues. Disordered stretches follow at residues serine 693–proline 732 and glutamate 754–aspartate 779. A Phosphoserine modification is found at serine 725. Residues glutamate 761–aspartate 779 show a composition bias toward basic and acidic residues.

The protein belongs to the helicase family. In terms of assembly, homodimer; in free form. Component of the mitochondrial degradosome (mtEXO) complex which is a heteropentamer containing 2 copies of SUPV3L1 and 3 copies of PNPT1. As part of mitochondrial degradosome complex, interacts with GRSF1 in a RNA-dependent manner; the interaction enhances the activity of the complex. Interacts with LAMTOR5/HBXIP, WRN and BLM. The cofactor is Mg(2+). Mn(2+) is required as a cofactor.

The protein resides in the nucleus. It localises to the mitochondrion matrix. The protein localises to the mitochondrion nucleoid. It carries out the reaction ATP + H2O = ADP + phosphate + H(+). Helicase activity toward DNA substrate is inhibited by micromolar concentrations of 5,6-dichloro-1-(beta-D-ribofuranosyl)benzotriazole (DRBT) and 4,5,6,7-tetrabromobenzotriazole (TBBT). Helicase activity toward RNA substrate is inhibited by elevated concentrations of TBBT. Inhibited by some ring-expanded nucleoside analogs. In terms of biological role, major helicase player in mitochondrial RNA metabolism. Component of the mitochondrial degradosome (mtEXO) complex, that degrades 3' overhang double-stranded RNA with a 3'-to-5' directionality in an ATP-dependent manner. Involved in the degradation of non-coding mitochondrial transcripts (MT-ncRNA) and tRNA-like molecules. ATPase and ATP-dependent multisubstrate helicase, able to unwind double-stranded (ds) DNA and RNA, and RNA/DNA heteroduplexes in the 5'-to-3' direction. Plays a role in the RNA surveillance system in mitochondria; regulates the stability of mature mRNAs, the removal of aberrantly formed mRNAs and the rapid degradation of non coding processing intermediates. Also implicated in recombination and chromatin maintenance pathways. May protect cells from apoptosis. Associates with mitochondrial DNA. The protein is ATP-dependent RNA helicase SUPV3L1, mitochondrial (Supv3l1) of Mus musculus (Mouse).